A 378-amino-acid chain; its full sequence is Acetylornithine deacetylase (378 aa).

A Zn(2+)-binding site is contributed by H76. D78 is an active-site residue. D108 is a binding site for Zn(2+). E140 is an active-site residue. Residues E141, E165, and H351 each contribute to the Zn(2+) site.

It belongs to the peptidase M20A family. ArgE subfamily. Homodimer. Requires Zn(2+) as cofactor. It depends on Co(2+) as a cofactor. Glutathione is required as a cofactor.

It is found in the cytoplasm. The enzyme catalyses N(2)-acetyl-L-ornithine + H2O = L-ornithine + acetate. The protein operates within amino-acid biosynthesis; L-arginine biosynthesis; L-ornithine from N(2)-acetyl-L-ornithine (linear): step 1/1. Catalyzes the hydrolysis of the amide bond of N(2)-acetylated L-amino acids. Cleaves the acetyl group from N-acetyl-L-ornithine to form L-ornithine, an intermediate in L-arginine biosynthesis pathway, and a branchpoint in the synthesis of polyamines. The polypeptide is Acetylornithine deacetylase (Vibrio cholerae serotype O1 (strain ATCC 39541 / Classical Ogawa 395 / O395)).